The following is a 290-amino-acid chain: Protein EURL homolog (290 aa).

Residues 185–206 form a disordered region; it reads SHSQAQKTEETSSGPEGTIQTQ. A coiled-coil region spans residues 228-251; sequence AKLQQRIQEVFEELTHQVQEKDSL.

The protein belongs to the EURL family. In terms of assembly, interacts with CCDC85B. Expressed in brain (at protein level). Expressed in neural progenitor cells and postmitotic neurons of the embryonic cerebral cortex.

Its function is as follows. Plays a role in cortical progenitor cell proliferation and differentiation. Promotes dendritic spine development of post-migratory cortical projection neurons by modulating the beta-catenin signaling pathway. This Mus musculus (Mouse) protein is Protein EURL homolog.